We begin with the raw amino-acid sequence, 248 residues long: 3-deoxy-manno-octulosonate cytidylyltransferase (248 aa).

It belongs to the KdsB family.

It localises to the cytoplasm. It catalyses the reaction 3-deoxy-alpha-D-manno-oct-2-ulosonate + CTP = CMP-3-deoxy-beta-D-manno-octulosonate + diphosphate. Its pathway is nucleotide-sugar biosynthesis; CMP-3-deoxy-D-manno-octulosonate biosynthesis; CMP-3-deoxy-D-manno-octulosonate from 3-deoxy-D-manno-octulosonate and CTP: step 1/1. It participates in bacterial outer membrane biogenesis; lipopolysaccharide biosynthesis. Its function is as follows. Activates KDO (a required 8-carbon sugar) for incorporation into bacterial lipopolysaccharide in Gram-negative bacteria. The chain is 3-deoxy-manno-octulosonate cytidylyltransferase from Cronobacter sakazakii (strain ATCC BAA-894) (Enterobacter sakazakii).